A 95-amino-acid chain; its full sequence is Large ribosomal subunit protein bL21 (95 aa).

Belongs to the bacterial ribosomal protein bL21 family. Part of the 50S ribosomal subunit. Contacts protein L20.

Functionally, this protein binds to 23S rRNA in the presence of protein L20. The sequence is that of Large ribosomal subunit protein bL21 from Chlorobaculum tepidum (strain ATCC 49652 / DSM 12025 / NBRC 103806 / TLS) (Chlorobium tepidum).